Here is a 72-residue protein sequence, read N- to C-terminus: MAKQDVIELEGTVLDTLPNAMFKVELENGHEILAHVSGKIRMNYIRILPGDKVTVEMSPYDLTRGRITYRYK.

Residues 1 to 72 form the S1-like domain; sequence MAKQDVIELE…TRGRITYRYK (72 aa).

It belongs to the IF-1 family. In terms of assembly, component of the 30S ribosomal translation pre-initiation complex which assembles on the 30S ribosome in the order IF-2 and IF-3, IF-1 and N-formylmethionyl-tRNA(fMet); mRNA recruitment can occur at any time during PIC assembly.

The protein resides in the cytoplasm. One of the essential components for the initiation of protein synthesis. Stabilizes the binding of IF-2 and IF-3 on the 30S subunit to which N-formylmethionyl-tRNA(fMet) subsequently binds. Helps modulate mRNA selection, yielding the 30S pre-initiation complex (PIC). Upon addition of the 50S ribosomal subunit IF-1, IF-2 and IF-3 are released leaving the mature 70S translation initiation complex. The protein is Translation initiation factor IF-1 of Staphylococcus aureus (strain USA300 / TCH1516).